Consider the following 488-residue polypeptide: Inosine-5'-monophosphate dehydrogenase (488 aa).

2 consecutive CBS domains span residues 95 to 153 (VISN…SIKI) and 157 to 216 (MTKD…AKDE). Residues Asp250 and 300 to 302 (GIG) each bind NAD(+). K(+) is bound by residues Gly302 and Gly304. An IMP-binding site is contributed by Ser305. Cys307 provides a ligand contact to K(+). Catalysis depends on Cys307, which acts as the Thioimidate intermediate. IMP-binding positions include 340–342 (DGG), 363–364 (GS), and 387–391 (YRGMG). The active-site Proton acceptor is Arg403. Glu417 lines the IMP pocket. The interval 467–488 (AGLAESHPHNVQITKESPNYSF) is disordered. Residues Glu471, Ser472, and His473 each coordinate K(+). Polar residues predominate over residues 475–488 (HNVQITKESPNYSF).

This sequence belongs to the IMPDH/GMPR family. As to quaternary structure, homotetramer. The cofactor is K(+).

It catalyses the reaction IMP + NAD(+) + H2O = XMP + NADH + H(+). Its pathway is purine metabolism; XMP biosynthesis via de novo pathway; XMP from IMP: step 1/1. Mycophenolic acid (MPA) is a non-competitive inhibitor that prevents formation of the closed enzyme conformation by binding to the same site as the amobile flap. In contrast, mizoribine monophosphate (MZP) is a competitive inhibitor that induces the closed conformation. MPA is a potent inhibitor of mammalian IMPDHs but a poor inhibitor of the bacterial enzymes. MZP is a more potent inhibitor of bacterial IMPDH. Catalyzes the conversion of inosine 5'-phosphate (IMP) to xanthosine 5'-phosphate (XMP), the first committed and rate-limiting step in the de novo synthesis of guanine nucleotides, and therefore plays an important role in the regulation of cell growth. The protein is Inosine-5'-monophosphate dehydrogenase of Staphylococcus epidermidis (strain ATCC 35984 / DSM 28319 / BCRC 17069 / CCUG 31568 / BM 3577 / RP62A).